The following is a 220-amino-acid chain: MKAGTLTLLIALCLPISVSATTLRLSSEVDLLVLDGKKVSSSLLRGADSIELENGPHQLVFRVEKTIQMPGHGERLYISPPLVASFNTQLISQVNFRLPSLLNEQETAHFDAAPRLELLDGDAMPIPVKLDILAITSVAKPIDYEGEVERYNKSAKRASLPQFATMMADDSTLLSGVSELDAIPPQSQVLTEQRLKYWFKQADPQTRNNFLQWAEKQPSS.

Residues 1-20 (MKAGTLTLLIALCLPISVSA) form the signal peptide.

Belongs to the UPF0319 family.

This Escherichia fergusonii (strain ATCC 35469 / DSM 13698 / CCUG 18766 / IAM 14443 / JCM 21226 / LMG 7866 / NBRC 102419 / NCTC 12128 / CDC 0568-73) protein is UPF0319 protein YccT.